The primary structure comprises 359 residues: DNA polymerase IV (359 aa).

The 182-residue stretch at 4–185 (IIHIDMDCYF…LPLSKIPGVG (182 aa)) folds into the UmuC domain. Mg(2+) is bound by residues Asp-8 and Asp-103. Residue Glu-104 is part of the active site.

Belongs to the DNA polymerase type-Y family. In terms of assembly, monomer. Requires Mg(2+) as cofactor.

The protein localises to the cytoplasm. It catalyses the reaction DNA(n) + a 2'-deoxyribonucleoside 5'-triphosphate = DNA(n+1) + diphosphate. Its function is as follows. Poorly processive, error-prone DNA polymerase involved in untargeted mutagenesis. Copies undamaged DNA at stalled replication forks, which arise in vivo from mismatched or misaligned primer ends. These misaligned primers can be extended by PolIV. Exhibits no 3'-5' exonuclease (proofreading) activity. May be involved in translesional synthesis, in conjunction with the beta clamp from PolIII. In Shewanella frigidimarina (strain NCIMB 400), this protein is DNA polymerase IV.